The sequence spans 104 residues: AVIToxin-VAR2 (104 aa).

The signal sequence occupies residues methionine 1–serine 19. Disulfide bonds link cysteine 26/cysteine 38, cysteine 32/cysteine 50, cysteine 37/cysteine 78, cysteine 60/cysteine 86, and cysteine 80/cysteine 96.

The protein belongs to the AVIT (prokineticin) family. As to expression, expressed by the venom gland.

It is found in the secreted. Its function is as follows. Potent agonist for both PKR1/PROKR1 and PKR2/PROKR2. Potently contracts gastrointestinal (GI) smooth muscle. The sequence is that of AVIToxin-VAR2 from Varanus varius (Lace monitor lizard).